A 63-amino-acid chain; its full sequence is Overexpressed in colon carcinoma 1 protein homolog (63 aa).

The span at M1–G12 shows a compositional bias: low complexity. The tract at residues M1–G40 is disordered.

The protein belongs to the OCC1 family.

The polypeptide is Overexpressed in colon carcinoma 1 protein homolog (Bos taurus (Bovine)).